A 279-amino-acid chain; its full sequence is Tryptophan 2,3-dioxygenase (279 aa).

Substrate contacts are provided by residues 48–52 (FIVIH), Tyr-110, and Arg-114. A heme-binding site is contributed by His-237. Thr-251 provides a ligand contact to substrate.

This sequence belongs to the tryptophan 2,3-dioxygenase family. As to quaternary structure, homotetramer. Heme serves as cofactor.

It catalyses the reaction L-tryptophan + O2 = N-formyl-L-kynurenine. Its pathway is amino-acid degradation; L-tryptophan degradation via kynurenine pathway; L-kynurenine from L-tryptophan: step 1/2. Its function is as follows. Heme-dependent dioxygenase that catalyzes the oxidative cleavage of the L-tryptophan (L-Trp) pyrrole ring and converts L-tryptophan to N-formyl-L-kynurenine. Catalyzes the oxidative cleavage of the indole moiety. This is Tryptophan 2,3-dioxygenase from Exiguobacterium sibiricum (strain DSM 17290 / CCUG 55495 / CIP 109462 / JCM 13490 / 255-15).